Consider the following 137-residue polypeptide: Small ribosomal subunit protein uS11 (137 aa).

The interval Glu116–Val137 is disordered.

It belongs to the universal ribosomal protein uS11 family. Part of the 30S ribosomal subunit.

Located on the platform of the 30S subunit. The chain is Small ribosomal subunit protein uS11 from Pyrococcus abyssi (strain GE5 / Orsay).